Consider the following 485-residue polypeptide: Glutamate--tRNA ligase (485 aa).

Positions 10-20 (PSPTGHLHIGN) match the 'HIGH' region motif. The 'KMSKS' region motif lies at 253-257 (KLSKR). Residue Lys256 participates in ATP binding.

It belongs to the class-I aminoacyl-tRNA synthetase family. Glutamate--tRNA ligase type 1 subfamily. Monomer.

The protein resides in the cytoplasm. It catalyses the reaction tRNA(Glu) + L-glutamate + ATP = L-glutamyl-tRNA(Glu) + AMP + diphosphate. Catalyzes the attachment of glutamate to tRNA(Glu) in a two-step reaction: glutamate is first activated by ATP to form Glu-AMP and then transferred to the acceptor end of tRNA(Glu). The polypeptide is Glutamate--tRNA ligase (Enterococcus faecalis (strain ATCC 700802 / V583)).